The primary structure comprises 500 residues: MQDQYILALDQGTTSSRAMLFDRQGNIVSIAQKEFEQIYPQPGWVEHDPQEIWSTQAGVAAEAVTRTGLNGTSIAAIGITNQRETTIVWDRETGQPVYNAIVWQDRRTADFCDSLKKQGLEAKVRAKTGLPIDSYFSATKIRWILDNVPGARDKARQGKLAFGTVDSWLVWNFTKHELHVTDVTNASRTMLFNIHTREWDSELLELLDIPRSMLPEVKASSEIYGHTKTTVFASKIPLAGIAGDQHAALFGQMCTTSGMVKNTYGTGCFLMMNTGDKPIESKNNLVTTIAWQIGDDVQYALEGSIFIAGAVVQWLRDGVGLIKTAAEIEALAASVPHTDGVYLVPAFAGLGAPHWNARARGSVFGVTRGTSAAHLARAALDAIAYQSLDVLAAMEADSGISIGELRVDGGASANDLLMQFQADLLGVDAVRPQITETTALGAAYLAGLAIGYWKNLDEVRDQWQLDRRFAPSMPKEQVEQRMAGWQRAVRAAKAWADDTQ.

Residue T13 coordinates ADP. ATP-binding residues include T13, T14, and S15. T13 contacts sn-glycerol 3-phosphate. R17 lines the ADP pocket. Residues R83, E84, Y135, and D244 each coordinate sn-glycerol 3-phosphate. 5 residues coordinate glycerol: R83, E84, Y135, D244, and Q245. ADP is bound by residues T266 and G309. Residues T266, G309, Q313, and G410 each contribute to the ATP site. The ADP site is built by G410 and N414.

The protein belongs to the FGGY kinase family.

The enzyme catalyses glycerol + ATP = sn-glycerol 3-phosphate + ADP + H(+). The protein operates within polyol metabolism; glycerol degradation via glycerol kinase pathway; sn-glycerol 3-phosphate from glycerol: step 1/1. With respect to regulation, inhibited by fructose 1,6-bisphosphate (FBP). Key enzyme in the regulation of glycerol uptake and metabolism. Catalyzes the phosphorylation of glycerol to yield sn-glycerol 3-phosphate. In Burkholderia cenocepacia (strain HI2424), this protein is Glycerol kinase.